The sequence spans 143 residues: Translation initiation factor 2 subunit beta (143 aa).

This sequence belongs to the eIF-2-beta/eIF-5 family. Heterotrimer composed of an alpha, a beta and a gamma chain.

Its function is as follows. eIF-2 functions in the early steps of protein synthesis by forming a ternary complex with GTP and initiator tRNA. In Methanocaldococcus jannaschii (strain ATCC 43067 / DSM 2661 / JAL-1 / JCM 10045 / NBRC 100440) (Methanococcus jannaschii), this protein is Translation initiation factor 2 subunit beta (eif2b).